The primary structure comprises 242 residues: UDP-2,3-diacylglucosamine hydrolase (242 aa).

Mn(2+) is bound by residues Asp-7, His-9, Asp-40, Asn-78, and His-113. 78–79 contacts substrate; it reads NR. 5 residues coordinate substrate: Asp-121, Ser-159, Thr-163, Lys-166, and His-194. His-194 and His-196 together coordinate Mn(2+).

It belongs to the LpxH family. The cofactor is Mn(2+).

The protein localises to the cell inner membrane. The catalysed reaction is UDP-2-N,3-O-bis[(3R)-3-hydroxytetradecanoyl]-alpha-D-glucosamine + H2O = 2-N,3-O-bis[(3R)-3-hydroxytetradecanoyl]-alpha-D-glucosaminyl 1-phosphate + UMP + 2 H(+). Its pathway is glycolipid biosynthesis; lipid IV(A) biosynthesis; lipid IV(A) from (3R)-3-hydroxytetradecanoyl-[acyl-carrier-protein] and UDP-N-acetyl-alpha-D-glucosamine: step 4/6. Hydrolyzes the pyrophosphate bond of UDP-2,3-diacylglucosamine to yield 2,3-diacylglucosamine 1-phosphate (lipid X) and UMP by catalyzing the attack of water at the alpha-P atom. Involved in the biosynthesis of lipid A, a phosphorylated glycolipid that anchors the lipopolysaccharide to the outer membrane of the cell. In Ectopseudomonas mendocina (strain ymp) (Pseudomonas mendocina), this protein is UDP-2,3-diacylglucosamine hydrolase.